Reading from the N-terminus, the 249-residue chain is MPFEIVFEGAKEFAQLIDTASKLIDEAAFKVTEDGISMRAMDPSRVVLIDLNLPSSIFSKYEVVEPETIGVNMDHLKKILKRGKAKDTLILKKGEENFLEITIQGTATRTFRVPLIDVEEMEVDLPELPFTAKVVVLGEVLKDAVKDASLVSDSIKFIARENEFIMKAEGETQEVEIKLTLEDEGLLDIEVQEETKSAYGVSYLSDMVKGLGKADEVTIKFGNEMPMQMEYYIRDEGRLTFLLAPRVEE.

This sequence belongs to the PCNA family. Homotrimer which circularizes head-to-tail (head is a N-terminus, tail is at C-terminus) to form a toroid. RFC opens the toroid so it can load on DNA. Interacts with both Pol I (pol) and Pol II (polB-polC), with Hel308 (hjm) and with Hjc. Interaction with the C-terminal PIP-box of RfcL may stabilize the toroidal structure.

Functionally, sliding clamp subunit that acts as a moving platform for DNA processing. Responsible for tethering the catalytic subunit of DNA polymerase to DNA during high-speed replication. Unlike its eukaryotic paralog, loads on circular DNA without the replication factor C (RFC) clamp loader, although RFC greatly increases loading efficiency. Stimulates the ATPase activity of replication factor C (RFC) in the presence of ssDNA. Stimulates the helicase activity of Hel308 and may alter its substrate specificity. This Pyrococcus furiosus (strain ATCC 43587 / DSM 3638 / JCM 8422 / Vc1) protein is DNA polymerase sliding clamp.